Reading from the N-terminus, the 405-residue chain is L-carnitine CoA-transferase (405 aa).

2 residues coordinate CoA: Lys97 and Arg104. Asp169 serves as the catalytic Nucleophile.

The protein belongs to the CoA-transferase III family. CaiB subfamily. As to quaternary structure, homodimer.

The protein resides in the cytoplasm. The catalysed reaction is crotonobetainyl-CoA + (R)-carnitine = crotonobetaine + (R)-carnitinyl-CoA. It carries out the reaction 4-(trimethylamino)butanoyl-CoA + (R)-carnitine = (R)-carnitinyl-CoA + 4-(trimethylamino)butanoate. It participates in amine and polyamine metabolism; carnitine metabolism. Catalyzes the reversible transfer of the CoA moiety from gamma-butyrobetainyl-CoA to L-carnitine to generate L-carnitinyl-CoA and gamma-butyrobetaine. Is also able to catalyze the reversible transfer of the CoA moiety from gamma-butyrobetainyl-CoA or L-carnitinyl-CoA to crotonobetaine to generate crotonobetainyl-CoA. The polypeptide is L-carnitine CoA-transferase (Escherichia coli (strain K12 / MC4100 / BW2952)).